The chain runs to 148 residues: UPF0756 membrane protein NGK_2061 (148 aa).

Helical transmembrane passes span 10–32, 50–70, 85–105, and 116–136; these read LVTLILLGVVSNNNSITVSATIL, HGLNLGIILLTIGVLSPLVSG, MISAVFIGIFVAWLAGCGVPL, and LLIGTVIGVAFMGGIPVGPLI.

The protein belongs to the UPF0756 family.

Its subcellular location is the cell membrane. The sequence is that of UPF0756 membrane protein NGK_2061 from Neisseria gonorrhoeae (strain NCCP11945).